The sequence spans 211 residues: Lysozyme g (211 aa).

The N-terminal stretch at 1–26 is a signal peptide; the sequence is MLGKNDPMCLVLVLLGLTALLGICQG. 2 disulfides stabilise this stretch: Cys-30–Cys-86 and Cys-44–Cys-55. Residues Glu-99 and Asp-112 contribute to the active site.

Belongs to the glycosyl hydrolase 23 family. In terms of tissue distribution, granulocyte compartment of myelomonocytic cells.

Its subcellular location is the secreted. The enzyme catalyses Hydrolysis of (1-&gt;4)-beta-linkages between N-acetylmuramic acid and N-acetyl-D-glucosamine residues in a peptidoglycan and between N-acetyl-D-glucosamine residues in chitodextrins.. This Gallus gallus (Chicken) protein is Lysozyme g.